A 259-amino-acid chain; its full sequence is Deoxyribose-phosphate aldolase (259 aa).

The Proton donor/acceptor role is filled by Asp-102. The Schiff-base intermediate with acetaldehyde role is filled by Lys-167. The active-site Proton donor/acceptor is Lys-201.

It belongs to the DeoC/FbaB aldolase family. DeoC type 2 subfamily.

The protein resides in the cytoplasm. It catalyses the reaction 2-deoxy-D-ribose 5-phosphate = D-glyceraldehyde 3-phosphate + acetaldehyde. Its pathway is carbohydrate degradation; 2-deoxy-D-ribose 1-phosphate degradation; D-glyceraldehyde 3-phosphate and acetaldehyde from 2-deoxy-alpha-D-ribose 1-phosphate: step 2/2. Functionally, catalyzes a reversible aldol reaction between acetaldehyde and D-glyceraldehyde 3-phosphate to generate 2-deoxy-D-ribose 5-phosphate. This Escherichia coli O45:K1 (strain S88 / ExPEC) protein is Deoxyribose-phosphate aldolase.